We begin with the raw amino-acid sequence, 147 residues long: Protein archease (147 aa).

The Ca(2+) site is built by Asp17, Asp146, and Ile147.

This sequence belongs to the archease family.

In terms of biological role, activates the tRNA-splicing ligase complex by facilitating the enzymatic turnover of catalytic subunit RtcB. Acts by promoting the guanylylation of RtcB, a key intermediate step in tRNA ligation. Can also alter the NTP specificity of RtcB such that ATP, dGTP or ITP is used efficiently. The polypeptide is Protein archease (Pyrobaculum calidifontis (strain DSM 21063 / JCM 11548 / VA1)).